Here is a 126-residue protein sequence, read N- to C-terminus: MQDALTHGMLREYLPILVLLAMAIGLGLILIAAAAIIAYRNPDPEKVSAYECGFNAFDDARMKFDVRFYLVSILFIIFDLEVAFLFPWAVAFGDMSMTAFWSMMVFLSVLTVGFAYEWKKGALEWA.

3 consecutive transmembrane segments (helical) span residues 16–36 (ILVL…AAAI), 73–93 (ILFI…VAFG), and 95–115 (MSMT…VGFA).

It belongs to the complex I subunit 3 family. In terms of assembly, NDH-1 is composed of 14 different subunits. Subunits NuoA, H, J, K, L, M, N constitute the membrane sector of the complex.

The protein resides in the cell inner membrane. The catalysed reaction is a quinone + NADH + 5 H(+)(in) = a quinol + NAD(+) + 4 H(+)(out). Functionally, NDH-1 shuttles electrons from NADH, via FMN and iron-sulfur (Fe-S) centers, to quinones in the respiratory chain. The immediate electron acceptor for the enzyme in this species is believed to be ubiquinone. Couples the redox reaction to proton translocation (for every two electrons transferred, four hydrogen ions are translocated across the cytoplasmic membrane), and thus conserves the redox energy in a proton gradient. The polypeptide is NADH-quinone oxidoreductase subunit A (Rhodobacter capsulatus (Rhodopseudomonas capsulata)).